A 485-amino-acid chain; its full sequence is Protein hunchback (485 aa).

A disordered region spans residues Thr1–Lys77. Over residues Gln16–Asp37 the composition is skewed to polar residues. Residues Ala59 to Asp72 show a composition bias toward acidic residues. C2H2-type zinc fingers lie at residues Tyr87–His109, Leu116–His138, Phe144–His166, and Tyr172–His196. Disordered stretches follow at residues Lys229–Ser270, Asn318–His361, and Pro398–Ser422. The segment covering Asn257–Ser270 has biased composition (polar residues). Positions Asn325 to Glu335 are enriched in acidic residues. Positions Asp345–Gln358 are enriched in polar residues. Over residues Gln402–Thr416 the composition is skewed to low complexity. 2 consecutive C2H2-type zinc fingers follow at residues Tyr432–His454 and Phe460–His484.

The protein belongs to the hunchback C2H2-type zinc-finger protein family.

The protein resides in the nucleus. Its function is as follows. Gap class segmentation protein that controls development of head structures. This Clogmia albipunctata (Mothmidge) protein is Protein hunchback (hb).